The primary structure comprises 200 residues: MLRIGLTGGIGSGKSTVADLLSAEGFLIIDADAIARDIVEPGQPALAELVEAFGEDILNPDGTLNRPGLAAKAFVSSEQTALLNSITHPRIAEETARRFAEAEAAGTKAAVYDMPLLVDKGLDRTMDLVVVVDVEEDERVRRLVAKRGLEEDDVRRRIASQVPDEIRLKAADIVIDNNGPVENLRAQADRLIAEILTRIK.

Residues 3-200 (RIGLTGGIGS…LIAEILTRIK (198 aa)) form the DPCK domain. 11–16 (GSGKST) serves as a coordination point for ATP.

This sequence belongs to the CoaE family.

It is found in the cytoplasm. It catalyses the reaction 3'-dephospho-CoA + ATP = ADP + CoA + H(+). The protein operates within cofactor biosynthesis; coenzyme A biosynthesis; CoA from (R)-pantothenate: step 5/5. Its function is as follows. Catalyzes the phosphorylation of the 3'-hydroxyl group of dephosphocoenzyme A to form coenzyme A. The polypeptide is Dephospho-CoA kinase (Corynebacterium efficiens (strain DSM 44549 / YS-314 / AJ 12310 / JCM 11189 / NBRC 100395)).